Here is a 150-residue protein sequence, read N- to C-terminus: Infection structure-specific protein 24 (150 aa).

Its function is as follows. Involved in the development of infection structures. The germ tube elongates across the leaf surface of the infected plant until it recognizes a stomate. Physical stimuli provided by the stomate induce differentiation of the germ tube to form a series of infection structures involved in host colonization. This chain is Infection structure-specific protein 24 (INF24), found in Uromyces appendiculatus (Rust fungus).